Reading from the N-terminus, the 615-residue chain is Extracellular metalloproteinase 1 (615 aa).

The first 8 residues, 1-8, serve as a signal peptide directing secretion; that stretch reads SLPLHVLA. Residues 9-235 constitute a propeptide that is removed on maturation; sequence HPQPSTSTSL…VHNVVDYVAH (227 aa). A glycan (N-linked (GlcNAc...) asparagine) is linked at N276. H419 contacts Zn(2+). E420 is an active-site residue. Residue H423 participates in Zn(2+) binding. Residues N464, N583, and N612 are each glycosylated (N-linked (GlcNAc...) asparagine).

Belongs to the peptidase M36 family. Zn(2+) serves as cofactor.

The protein resides in the secreted. Functionally, secreted metalloproteinase probably acting as a virulence factor. In Trichophyton equinum (Horse ringworm fungus), this protein is Extracellular metalloproteinase 1 (MEP1).